A 1254-amino-acid polypeptide reads, in one-letter code: Receptor tyrosine-protein kinase erbB-2 (1254 aa).

The signal sequence occupies residues Met1–Gly22. The Extracellular portion of the chain corresponds to Thr23 to Thr652. Cysteines 26 and 53 form a disulfide. N-linked (GlcNAc...) asparagine glycosylation is found at Asn68, Asn125, and Asn187. Intrachain disulfides connect Cys162/Cys192, Cys195/Cys204, Cys199/Cys212, Cys236/Cys244, Cys240/Cys252, Cys255/Cys264, Cys268/Cys295, Cys299/Cys311, Cys315/Cys331, Cys334/Cys338, Cys342/Cys367, Cys475/Cys504, Cys511/Cys520, and Cys515/Cys528. N-linked (GlcNAc...) asparagine glycosylation occurs at Asn259. Asn530 is a glycosylation site (N-linked (GlcNAc...) asparagine). 8 disulfides stabilise this stretch: Cys531–Cys540, Cys544–Cys560, Cys563–Cys576, Cys567–Cys584, Cys587–Cys596, Cys600–Cys623, Cys626–Cys634, and Cys630–Cys642. A glycan (N-linked (GlcNAc...) asparagine) is linked at Asn571. The N-linked (GlcNAc...) asparagine glycan is linked to Asn629. Residues Ser653 to Ile675 form a helical membrane-spanning segment. The segment at Lys676–Arg689 is required for interaction with KPNB1 and EEA1. A Nuclear localization signal motif is present at residues Lys676 to Arg689. The Cytoplasmic portion of the chain corresponds to Lys676 to Val1254. The Protein kinase domain maps to Leu720 to Val987. ATP-binding positions include Leu726 to Val734 and Lys753. The active-site Proton acceptor is the Asp845. Phosphotyrosine is present on Tyr877. 2 disordered regions span residues Gly1029–Pro1116 and Cys1133–Gly1179. 4 positions are modified to phosphoserine: Ser1054, Ser1078, Ser1083, and Ser1107. Position 1112 is a phosphotyrosine (Tyr1112). The residue at position 1139 (Tyr1139) is a Phosphotyrosine; by autocatalysis. Positions Arg1146–Arg1161 are enriched in pro residues. Position 1166 is a phosphothreonine (Thr1166). The segment at Glu1195–Leu1197 is interaction with PIK3C2B. Tyr1196 is subject to Phosphotyrosine. The disordered stretch occupies residues Asp1223–Val1254. Residues Pro1232–Ala1242 show a composition bias toward polar residues. Tyr1247 is modified (phosphotyrosine; by autocatalysis).

It belongs to the protein kinase superfamily. Tyr protein kinase family. EGF receptor subfamily. As to quaternary structure, homodimer. Heterodimer with EGFR, ERBB3 and ERBB4. Part of a complex with EGFR and either PIK3C2A or PIK3C2B. May interact with PIK3C2B when phosphorylated on Tyr-1196. Interacts with PRKCABP and PLXNB1. Interacts (when phosphorylated on Tyr-1247) with MEMO. Interacts with MUC1. Interacts (when phosphorylated on Tyr-1139) with GRB7 (via SH2 domain). Interacts (when phosphorylated on Tyr-1247) with ERBIN. Interacts with SRC, KPNB1, RANBP2, EEA1, CRM1, CLTC, PTK6, RPA194, MYOC and ACTB. Interacts (preferentially with the tyrosine phosphorylated form) with CPNE3; this interaction occurs at the cell membrane and is increased in a growth factor heregulin-dependent manner. Interacts with HSP90AA1 and HSP90AB1 in an ATP-dependent manner; the interaction suppresses ERBB2 kinase activity. Interacts with SORL1; this interaction regulates ERBB2 subcellular distribution by promoting its recycling after internalization from endosomes back to the plasma membrane, hence stimulates ERBB2-mediated signaling. Interacts with SH3BGRL. Interacts with ROR1. In terms of processing, autophosphorylated. Autophosphorylation occurs in trans, i.e. one subunit of the dimeric receptor phosphorylates tyrosine residues on the other subunit. Ligand-binding increases phosphorylation on tyrosine residues. Signaling via SEMA4C promotes phosphorylation at Tyr-1247. Dephosphorylated by PTPN12.

The protein resides in the cell membrane. The protein localises to the cell projection. It localises to the ruffle membrane. Its subcellular location is the early endosome. It is found in the cytoplasm. The protein resides in the perinuclear region. The protein localises to the nucleus. It carries out the reaction L-tyrosyl-[protein] + ATP = O-phospho-L-tyrosyl-[protein] + ADP + H(+). Protein tyrosine kinase that is part of several cell surface receptor complexes, but that apparently needs a coreceptor for ligand binding. Essential component of a neuregulin-receptor complex, although neuregulins do not interact with it alone. GP30 is a potential ligand for this receptor. Regulates outgrowth and stabilization of peripheral microtubules (MTs). Upon ERBB2 activation, the MEMO1-RHOA-DIAPH1 signaling pathway elicits the phosphorylation and thus the inhibition of GSK3B at cell membrane. This prevents the phosphorylation of APC and CLASP2, allowing its association with the cell membrane. In turn, membrane-bound APC allows the localization of MACF1 to the cell membrane, which is required for microtubule capture and stabilization. In terms of biological role, in the nucleus is involved in transcriptional regulation. Associates with the 5'-TCAAATTC-3' sequence in the PTGS2/COX-2 promoter and activates its transcription. Implicated in transcriptional activation of CDKN1A; the function involves STAT3 and SRC. Involved in the transcription of rRNA genes by RNA Pol I and enhances protein synthesis and cell growth. The sequence is that of Receptor tyrosine-protein kinase erbB-2 (ERBB2) from Mesocricetus auratus (Golden hamster).